We begin with the raw amino-acid sequence, 253 residues long: Ditrans,polycis-undecaprenyl-diphosphate synthase ((2E,6E)-farnesyl-diphosphate specific) (253 aa).

The active site involves Asp25. Asp25 contributes to the Mg(2+) binding site. Substrate-binding positions include 26–29 (GNGR), Trp30, Arg38, His42, and 70–72 (SSE). Asn73 functions as the Proton acceptor in the catalytic mechanism. Substrate-binding residues include Trp74, Arg76, and Arg193. His198 contacts Mg(2+). 199–201 (RIS) contacts substrate. Glu212 provides a ligand contact to Mg(2+).

This sequence belongs to the UPP synthase family. As to quaternary structure, homodimer. Mg(2+) serves as cofactor.

The catalysed reaction is 8 isopentenyl diphosphate + (2E,6E)-farnesyl diphosphate = di-trans,octa-cis-undecaprenyl diphosphate + 8 diphosphate. Catalyzes the sequential condensation of isopentenyl diphosphate (IPP) with (2E,6E)-farnesyl diphosphate (E,E-FPP) to yield (2Z,6Z,10Z,14Z,18Z,22Z,26Z,30Z,34E,38E)-undecaprenyl diphosphate (di-trans,octa-cis-UPP). UPP is the precursor of glycosyl carrier lipid in the biosynthesis of bacterial cell wall polysaccharide components such as peptidoglycan and lipopolysaccharide. The protein is Ditrans,polycis-undecaprenyl-diphosphate synthase ((2E,6E)-farnesyl-diphosphate specific) of Pectobacterium atrosepticum (strain SCRI 1043 / ATCC BAA-672) (Erwinia carotovora subsp. atroseptica).